We begin with the raw amino-acid sequence, 155 residues long: SsrA-binding protein (155 aa).

The interval Lys-135–His-155 is disordered.

Belongs to the SmpB family.

Its subcellular location is the cytoplasm. Its function is as follows. Required for rescue of stalled ribosomes mediated by trans-translation. Binds to transfer-messenger RNA (tmRNA), required for stable association of tmRNA with ribosomes. tmRNA and SmpB together mimic tRNA shape, replacing the anticodon stem-loop with SmpB. tmRNA is encoded by the ssrA gene; the 2 termini fold to resemble tRNA(Ala) and it encodes a 'tag peptide', a short internal open reading frame. During trans-translation Ala-aminoacylated tmRNA acts like a tRNA, entering the A-site of stalled ribosomes, displacing the stalled mRNA. The ribosome then switches to translate the ORF on the tmRNA; the nascent peptide is terminated with the 'tag peptide' encoded by the tmRNA and targeted for degradation. The ribosome is freed to recommence translation, which seems to be the essential function of trans-translation. The chain is SsrA-binding protein from Oleidesulfovibrio alaskensis (strain ATCC BAA-1058 / DSM 17464 / G20) (Desulfovibrio alaskensis).